We begin with the raw amino-acid sequence, 468 residues long: MASISSLGVGSGLDLSSILDSLTAAQKATLTPISNQQSSFTAKLSAYGTLKSALTTFQTANTALSKADLFSATSTTSSTTAFSATTAGNAIAGKYTISVTHLAQAQTLTTRTTRDDTKTAIATSDSKLTIQQGGDKDPITIDISAANSSLSGIRDAINNAKAGVSASIINVGNGEYRLSVTSNDTGLDNAMTLSVSGDDALQSFMGYDASASSNGMEVSVAAQNAQLTVNNVAIENSSNTISDALENITLNLNDVTTGNQTLTITQDTSKAQTAIKDWVNAYNSLIDTFSSLTKYTAVDAGADSQSSSNGALLGDSTLRTIQTQLKSMLSNTVSSSSYKTLAQIGITTDPSDGKLELDADKLTAALKKDASGVGALIVGDGKKTGITTTIGSNLTSWLSTTGIIKAATDGVSKTLNKLTKDYNAASDRIDAQVARYKEQFTQLDVLMTSLNSTSSYLTQQFENNSNSK.

Residues 411–439 (VSKTLNKLTKDYNAASDRIDAQVARYKEQ) are a coiled coil.

The protein belongs to the FliD family. Homopentamer.

The protein localises to the secreted. It localises to the bacterial flagellum. Its function is as follows. Required for the morphogenesis and for the elongation of the flagellar filament by facilitating polymerization of the flagellin monomers at the tip of growing filament. Forms a capping structure, which prevents flagellin subunits (transported through the central channel of the flagellum) from leaking out without polymerization at the distal end. The sequence is that of Flagellar hook-associated protein 2 (fliD) from Escherichia coli (strain K12).